Consider the following 324-residue polypeptide: Bis(5'-nucleosyl)-tetraphosphatase, symmetrical (324 aa).

A disordered region spans residues 269–324 (PGREVTAPATAPRAPRRPRERQGRQRARGGRGGGNGNGNGGNAAAPAAAPGDAPQE). The segment covering 282-297 (APRRPRERQGRQRARG) has biased composition (basic residues). Residues 298–309 (GRGGGNGNGNGG) are compositionally biased toward gly residues. Positions 310-324 (NAAAPAAAPGDAPQE) are enriched in low complexity.

Belongs to the Ap4A hydrolase family.

The enzyme catalyses P(1),P(4)-bis(5'-adenosyl) tetraphosphate + H2O = 2 ADP + 2 H(+). Hydrolyzes diadenosine 5',5'''-P1,P4-tetraphosphate to yield ADP. This chain is Bis(5'-nucleosyl)-tetraphosphatase, symmetrical, found in Xanthomonas campestris pv. campestris (strain ATCC 33913 / DSM 3586 / NCPPB 528 / LMG 568 / P 25).